A 224-amino-acid chain; its full sequence is UPF0758 protein lwe1562 (224 aa).

The MPN domain occupies 102-224 (VIRCPDDAVK…YISLKEKGYF (123 aa)). Zn(2+) contacts are provided by H173, H175, and D186. Positions 173–186 (HNHPSGDPTPSSED) match the JAMM motif motif.

This sequence belongs to the UPF0758 family.

This chain is UPF0758 protein lwe1562, found in Listeria welshimeri serovar 6b (strain ATCC 35897 / DSM 20650 / CCUG 15529 / CIP 8149 / NCTC 11857 / SLCC 5334 / V8).